The primary structure comprises 149 residues: D-aminoacyl-tRNA deacylase (149 aa).

The Gly-cisPro motif, important for rejection of L-amino acids motif lies at 137-138 (GP).

Belongs to the DTD family. Homodimer.

The protein localises to the cytoplasm. It carries out the reaction glycyl-tRNA(Ala) + H2O = tRNA(Ala) + glycine + H(+). It catalyses the reaction a D-aminoacyl-tRNA + H2O = a tRNA + a D-alpha-amino acid + H(+). An aminoacyl-tRNA editing enzyme that deacylates mischarged D-aminoacyl-tRNAs. Also deacylates mischarged glycyl-tRNA(Ala), protecting cells against glycine mischarging by AlaRS. Acts via tRNA-based rather than protein-based catalysis; rejects L-amino acids rather than detecting D-amino acids in the active site. By recycling D-aminoacyl-tRNA to D-amino acids and free tRNA molecules, this enzyme counteracts the toxicity associated with the formation of D-aminoacyl-tRNA entities in vivo and helps enforce protein L-homochirality. This chain is D-aminoacyl-tRNA deacylase, found in Alkaliphilus metalliredigens (strain QYMF).